We begin with the raw amino-acid sequence, 529 residues long: G-protein coupled receptor 161 (529 aa).

Residues 1-30 lie on the Extracellular side of the membrane; it reads MSLNSSLSCRKELSNLTEEEGGEGGVIITQ. Asn4 and Asn15 each carry an N-linked (GlcNAc...) asparagine glycan. The helical transmembrane segment at 31–51 threads the bilayer; that stretch reads FIAIIVITIFVCLGNLVIVVT. Over 52–64 the chain is Cytoplasmic; the sequence is LYKKSYLLTLSNK. A helical membrane pass occupies residues 65–85; it reads FVFSLTLSNFLLSVLVLPFVV. Topologically, residues 86–101 are extracellular; the sequence is TSSIRREWIFGVVWCN. A disulfide bridge links Cys100 with Cys178. Residues 102-123 traverse the membrane as a helical segment; it reads FSALLYLLISSASMLTLGVIAI. The Cytoplasmic portion of the chain corresponds to 124–143; the sequence is DRYYAVLYPMVYPMKITGNR. A helical membrane pass occupies residues 144 to 164; sequence AVMALVYIWLHSLIGCLPPLF. The Extracellular portion of the chain corresponds to 165–190; sequence GWSSVEFDEFKWMCVAAWHREPGYTA. The chain crosses the membrane as a helical span at residues 191 to 211; the sequence is FWQIWCALFPFLVMLVCYGFI. Residues 212-269 lie on the Cytoplasmic side of the membrane; that stretch reads FRVARVKARKVHCGTVVIVEEDAQRTGRKNSSTSTSSSGSRRNAFQGVVYSANQCKAL. A helical transmembrane segment spans residues 270-290; sequence ITILVVLGAFMVTWGPYMVVI. Residues 291 to 306 are Extracellular-facing; that stretch reads ASEALWGKSSVSPSLE. Residues 307-327 traverse the membrane as a helical segment; the sequence is TWATWLSFASAVCHPLIYGLW. At 328 to 529 the chain is on the cytoplasmic side; sequence NKTVRKELLG…EGDVLAAEQR (202 aa).

Belongs to the G-protein coupled receptor 1 family.

It is found in the cell projection. It localises to the cilium membrane. The protein localises to the cell membrane. Its function is as follows. Key negative regulator of Shh signaling, which promotes the processing of GLI3 into GLI3R during neural tube development. Recruited by TULP3 and the IFT-A complex to primary cilia and acts as a regulator of the PKA-dependent basal repression machinery in Shh signaling by increasing cAMP levels, leading to promote the PKA-dependent processing of GLI3 into GLI3R and repress the Shh signaling. In presence of SHH, it is removed from primary cilia and is internalized into recycling endosomes, preventing its activity and allowing activation of the Shh signaling. Its ligand is unknown. This chain is G-protein coupled receptor 161 (GPR161), found in Homo sapiens (Human).